The following is a 200-amino-acid chain: Probable nicotinate-nucleotide adenylyltransferase (200 aa).

The protein belongs to the NadD family.

It carries out the reaction nicotinate beta-D-ribonucleotide + ATP + H(+) = deamido-NAD(+) + diphosphate. The protein operates within cofactor biosynthesis; NAD(+) biosynthesis; deamido-NAD(+) from nicotinate D-ribonucleotide: step 1/1. Functionally, catalyzes the reversible adenylation of nicotinate mononucleotide (NaMN) to nicotinic acid adenine dinucleotide (NaAD). The chain is Probable nicotinate-nucleotide adenylyltransferase from Clostridium acetobutylicum (strain ATCC 824 / DSM 792 / JCM 1419 / IAM 19013 / LMG 5710 / NBRC 13948 / NRRL B-527 / VKM B-1787 / 2291 / W).